The primary structure comprises 260 residues: tRNA pseudouridine synthase A (260 aa).

The Nucleophile role is filled by Asp51. Position 109 (Tyr109) interacts with substrate.

The protein belongs to the tRNA pseudouridine synthase TruA family. Homodimer.

The enzyme catalyses uridine(38/39/40) in tRNA = pseudouridine(38/39/40) in tRNA. Formation of pseudouridine at positions 38, 39 and 40 in the anticodon stem and loop of transfer RNAs. This Methylibium petroleiphilum (strain ATCC BAA-1232 / LMG 22953 / PM1) protein is tRNA pseudouridine synthase A.